A 344-amino-acid polypeptide reads, in one-letter code: Dihydroorotase (344 aa).

Residues histidine 13 and histidine 15 each contribute to the Zn(2+) site. Substrate-binding positions include 15 to 17 and asparagine 41; that span reads HFR. 3 residues coordinate Zn(2+): lysine 98, histidine 135, and histidine 173. Lysine 98 is modified (N6-carboxylysine). Histidine 135 is a binding site for substrate. A substrate-binding site is contributed by leucine 218. Aspartate 246 contacts Zn(2+). Residue aspartate 246 is part of the active site. Substrate contacts are provided by histidine 250 and alanine 262.

Belongs to the metallo-dependent hydrolases superfamily. DHOase family. Class II DHOase subfamily. In terms of assembly, homodimer. It depends on Zn(2+) as a cofactor.

The catalysed reaction is (S)-dihydroorotate + H2O = N-carbamoyl-L-aspartate + H(+). The protein operates within pyrimidine metabolism; UMP biosynthesis via de novo pathway; (S)-dihydroorotate from bicarbonate: step 3/3. Functionally, catalyzes the reversible cyclization of carbamoyl aspartate to dihydroorotate. This chain is Dihydroorotase, found in Shewanella woodyi (strain ATCC 51908 / MS32).